The primary structure comprises 187 residues: MSKSASRARLADIIRTRSFGRGEITLASGRKSDFYFNLKPTMLDPEGAALLAELTYETLRDEKVDYVGGLEMGAVPLAGAIAQLSWLKNHPISAFFVRKKPKEHGARLSVEGLAKGESLAGKRCVIVEDVTTTGGSAIKAVEAVKESGAEIVLVLTMVDREEGATEAFAAAGLPFRSLYKASEFLNT.

5-phospho-alpha-D-ribose 1-diphosphate is bound by residues arginine 98, lysine 99, lysine 102, histidine 104, and 128–136 (EDVTTTGGS). Orotate contacts are provided by threonine 132 and arginine 160.

The protein belongs to the purine/pyrimidine phosphoribosyltransferase family. PyrE subfamily. Homodimer. It depends on Mg(2+) as a cofactor.

The enzyme catalyses orotidine 5'-phosphate + diphosphate = orotate + 5-phospho-alpha-D-ribose 1-diphosphate. It functions in the pathway pyrimidine metabolism; UMP biosynthesis via de novo pathway; UMP from orotate: step 1/2. Functionally, catalyzes the transfer of a ribosyl phosphate group from 5-phosphoribose 1-diphosphate to orotate, leading to the formation of orotidine monophosphate (OMP). The polypeptide is Orotate phosphoribosyltransferase (Rhodopseudomonas palustris (strain ATCC BAA-98 / CGA009)).